A 415-amino-acid chain; its full sequence is Serine hydroxymethyltransferase (415 aa).

Residues leucine 117 and 121–123 contribute to the (6S)-5,6,7,8-tetrahydrofolate site; that span reads GHL. Lysine 226 bears the N6-(pyridoxal phosphate)lysine mark.

This sequence belongs to the SHMT family. Homodimer. Pyridoxal 5'-phosphate is required as a cofactor.

The protein resides in the cytoplasm. The catalysed reaction is (6R)-5,10-methylene-5,6,7,8-tetrahydrofolate + glycine + H2O = (6S)-5,6,7,8-tetrahydrofolate + L-serine. It participates in one-carbon metabolism; tetrahydrofolate interconversion. Its pathway is amino-acid biosynthesis; glycine biosynthesis; glycine from L-serine: step 1/1. Catalyzes the reversible interconversion of serine and glycine with tetrahydrofolate (THF) serving as the one-carbon carrier. This reaction serves as the major source of one-carbon groups required for the biosynthesis of purines, thymidylate, methionine, and other important biomolecules. Also exhibits THF-independent aldolase activity toward beta-hydroxyamino acids, producing glycine and aldehydes, via a retro-aldol mechanism. This chain is Serine hydroxymethyltransferase, found in Dehalococcoides mccartyi (strain ATCC BAA-2266 / KCTC 15142 / 195) (Dehalococcoides ethenogenes (strain 195)).